A 313-amino-acid polypeptide reads, in one-letter code: MSLHSSLDPKAFGRVAVLFGGKSAEREVSLKSGNAVLSALQAAGVDAFGIDVGDDFLQRLASEKIDRAFIVLHGRGGEDGSMQGLLECAGIPYTGSGILASALAMDKLRTKQVWHSLGLPTPRHAVLTSQADCEAAAAELGFPLIVKPAHEGSSIGMAKVESVEALIAAWQDAARYDSQVLVEQWIAGPEYTVAVLRGEVLPPIGLGTPHSFYDYDAKYLADDTQYRIPCGLSAEKEAELKELTARACEAVGTQGWARADVMQDASGQFWLLEVNTVPGMTDHSLVPMAARAAGLDFQQLVLAILADSVEARG.

The region spanning 111 to 306 (KQVWHSLGLP…FQQLVLAILA (196 aa)) is the ATP-grasp domain. ATP is bound at residue 137–192 (AAELGFPLIVKPAHEGSSIGMAKVESVEALIAAWQDAARYDSQVLVEQWIAGPEYT). Mg(2+) contacts are provided by D260, E273, and N275.

This sequence belongs to the D-alanine--D-alanine ligase family. Requires Mg(2+) as cofactor. Mn(2+) serves as cofactor.

Its subcellular location is the cytoplasm. The enzyme catalyses 2 D-alanine + ATP = D-alanyl-D-alanine + ADP + phosphate + H(+). It participates in cell wall biogenesis; peptidoglycan biosynthesis. Functionally, cell wall formation. The protein is D-alanine--D-alanine ligase of Ectopseudomonas mendocina (strain ymp) (Pseudomonas mendocina).